The sequence spans 68 residues: UPF0435 protein Sca_1453 (68 aa).

This sequence belongs to the UPF0435 family.

The protein is UPF0435 protein Sca_1453 of Staphylococcus carnosus (strain TM300).